The chain runs to 357 residues: MNAVAKIEQHNPIGTDGFEFVEFTAPDAKGIEQLRQLFNMMGFTETAKHRSKEVFLFQQNDINIVLNGSPTGHVHEFALKHGPSACAMAFRVKNASQAAAYAESQGAKLVGSHANFGELNIPSLEGIGGSLLYLVDRYGDRSIYDVDFEFIEGRSANDNSVGLTYIDHLTHNVKRGQMDVWSGFYERIANFREIRYFDIEGKLTGLFSRAMTAPCGKIRIPINESADDTSQIEEFIREYHGEGIQHIALTTDDIYATVRKLRDNGVKFMSTPDTYYEKVDTRVAGHGEPLEQLRELNLLIDGAPGDDGILLQIFTDTVIGPIFFEIIQRKGNQGFGEGNFKALFESIEEDQIRRGVI.

VOC domains are found at residues 17–137 (GFEF…LVDR) and 165–316 (YIDH…IFTD). 3 residues coordinate Fe cation: histidine 168, histidine 246, and glutamate 325.

This sequence belongs to the 4HPPD family. As to quaternary structure, homotetramer. Fe cation is required as a cofactor.

The catalysed reaction is 3-(4-hydroxyphenyl)pyruvate + O2 = homogentisate + CO2. It functions in the pathway amino-acid degradation; L-phenylalanine degradation; acetoacetate and fumarate from L-phenylalanine: step 3/6. The chain is 4-hydroxyphenylpyruvate dioxygenase (hpd) from Pseudomonas aeruginosa (strain ATCC 15692 / DSM 22644 / CIP 104116 / JCM 14847 / LMG 12228 / 1C / PRS 101 / PAO1).